Consider the following 351-residue polypeptide: Dihydroorotate dehydrogenase (quinone) (351 aa).

FMN-binding positions include 61-65 (AGLDK) and T85. K65 lines the substrate pocket. 110–114 (NRMGF) is a substrate binding site. Residues N139 and N172 each coordinate FMN. A substrate-binding site is contributed by N172. S175 acts as the Nucleophile in catalysis. N177 lines the substrate pocket. Positions 217 and 245 each coordinate FMN. Substrate is bound at residue 246–247 (NT). FMN is bound by residues G268, G297, and 318-319 (YT).

Belongs to the dihydroorotate dehydrogenase family. Type 2 subfamily. As to quaternary structure, monomer. It depends on FMN as a cofactor.

The protein resides in the cell membrane. It catalyses the reaction (S)-dihydroorotate + a quinone = orotate + a quinol. Its pathway is pyrimidine metabolism; UMP biosynthesis via de novo pathway; orotate from (S)-dihydroorotate (quinone route): step 1/1. Functionally, catalyzes the conversion of dihydroorotate to orotate with quinone as electron acceptor. This chain is Dihydroorotate dehydrogenase (quinone), found in Xylella fastidiosa (strain M23).